A 723-amino-acid polypeptide reads, in one-letter code: MFEEKASSPSGKMGGEEKPIGAGEEKQKEGGKKKNKEGSGDGGRAELNPWPEYIYTRLEMYNILKAEHDSILAEKAEKDSKPIKVTLPDGKQVDAESWKTTPYQIACGISQGLADNTVIAKVNNVVWDLDRPLEEDCTLELLKFEDEEAQAVYWHSSAHIMGEAMERVYGGCLCYGPPIENGFYYDMYLEEGGVSSNDFSSLEALCKKIIKEKQAFERLEVKKETLLAMFKYNKFKCRILNEKVNTPTTTVYRCGPLIDLCRGPHVRHTGKIKALKIHKNSSTYWEGKADMETLQRIYGISFPDPKMLKEWEKFQEEAKNRDHRKIGRDQELYFFHELSPGSCFFLPKGAYIYNALIEFIRSEYRKRGFQEVVTPNIFNSRLWMTSGHWQHYSENMFSFEVEKELFALKPMNCPGHCLMFDHRPRSWRELPLRLADFGVLHRNELSGALTGLTRVRRFQQDDAHIFCAMEQIEDEIKGCLDFLRTVYSVFGFSFKLNLSTRPEKFLGDIEVWDQAEKQLENSLNEFGEKWELNSGDGAFYGPKIDIQIKDAIGRYHQCATIQLDFQLPIRFNLTYVSHDGDDKKRPVIVHRAILGSVERMIAILTENYGGKWPFWLSPRQVMVVPVGPTCDEYAQKVRQQFHDAKFMADIDLDPGCTLNKKIRNAQLAQYNFILVVGEKEKISGTVNIRTRDNKVHGERTISETIERLQQLKEFRSKQAEEEF.

The tract at residues 1–46 (MFEEKASSPSGKMGGEEKPIGAGEEKQKEGGKKKNKEGSGDGGRAE) is disordered. A compositionally biased stretch (basic and acidic residues) spans 14–39 (GGEEKPIGAGEEKQKEGGKKKNKEGS). At Ser-39 the chain carries Phosphoserine. In terms of domain architecture, TGS spans 79–143 (DSKPIKVTLP…EEDCTLELLK (65 aa)). Lys-243 is subject to N6-acetyllysine. Thr-246 is subject to Phosphothreonine. Position 298 is a phosphotyrosine (Tyr-298). Thr-453 carries the phosphothreonine modification. Phosphoserine is present on Ser-702.

Belongs to the class-II aminoacyl-tRNA synthetase family. Homodimer. Post-translationally, ISGylated.

Its subcellular location is the cytoplasm. The catalysed reaction is tRNA(Thr) + L-threonine + ATP = L-threonyl-tRNA(Thr) + AMP + diphosphate + H(+). With respect to regulation, inhibited by borrelidin (BN, IC 50 is 7 nM), which binds to 4 distinct subsites in the protein, preventing binding of all 3 substrates. Functionally, catalyzes the attachment of threonine to tRNA(Thr) in a two-step reaction: threonine is first activated by ATP to form Thr-AMP and then transferred to the acceptor end of tRNA(Thr). Also edits incorrectly charged tRNA(Thr) via its editing domain, at the post-transfer stage. The protein is Threonine--tRNA ligase 1, cytoplasmic of Homo sapiens (Human).